The primary structure comprises 281 residues: Acetylglutamate kinase (281 aa).

Substrate contacts are provided by residues 64-65, arginine 86, and asparagine 179; that span reads GG.

This sequence belongs to the acetylglutamate kinase family. ArgB subfamily.

It localises to the cytoplasm. It catalyses the reaction N-acetyl-L-glutamate + ATP = N-acetyl-L-glutamyl 5-phosphate + ADP. It participates in amino-acid biosynthesis; L-arginine biosynthesis; N(2)-acetyl-L-ornithine from L-glutamate: step 2/4. In terms of biological role, catalyzes the ATP-dependent phosphorylation of N-acetyl-L-glutamate. The chain is Acetylglutamate kinase from Campylobacter curvus (strain 525.92).